Consider the following 141-residue polypeptide: Cytochrome b-c1 complex subunit 6, mitochondrial (141 aa).

Over residues 18-37 the composition is skewed to low complexity; it reads ATVEAEAPADTPAETAPASE. The tract at residues 18 to 94 is disordered; it reads ATVEAEAPAD…ECRNSKECAP (77 aa). Residues 56–75 are compositionally biased toward acidic residues; the sequence is EEPEEEAEEEEEEEEDEDEI. Over residues 76-94 the composition is skewed to basic and acidic residues; it reads VDPKETLEEECRNSKECAP. Cys-102 and Cys-117 are joined by a disulfide.

This sequence belongs to the UQCRH/QCR6 family. Component of the ubiquinol-cytochrome c oxidoreductase (cytochrome b-c1 complex, complex III, CIII), a multisubunit enzyme composed of 10 subunits. The complex is composed of 3 respiratory subunits cytochrome b (cob), cytochrome c1 (cyt-1) and Rieske protein (fes-1), 2 core protein subunits pep and ucr-1, and 5 low-molecular weight protein subunits qcr6, qcr7, qcr8, qcr9 and probably NCU16844/qcr10. The complex exists as an obligatory dimer and forms supercomplexes (SCs) in the inner mitochondrial membrane with NADH-ubiquinone oxidoreductase (complex I, CI) and cytochrome c oxidase (complex IV, CIV), resulting in different assemblies (supercomplexes SCI(1)III(2), SCIII(2)IV(1) and SCIII(2)IV(2) as well as higher order I(x)III(y)IV(z) megacomplexes).

The protein resides in the mitochondrion inner membrane. Component of the ubiquinol-cytochrome c oxidoreductase, a multisubunit transmembrane complex that is part of the mitochondrial electron transport chain which drives oxidative phosphorylation. The respiratory chain contains 3 multisubunit complexes succinate dehydrogenase (complex II, CII), ubiquinol-cytochrome c oxidoreductase (cytochrome b-c1 complex, complex III, CIII) and cytochrome c oxidase (complex IV, CIV), that cooperate to transfer electrons derived from NADH and succinate to molecular oxygen, creating an electrochemical gradient over the inner membrane that drives transmembrane transport and the ATP synthase. The cytochrome b-c1 complex catalyzes electron transfer from ubiquinol to cytochrome c, linking this redox reaction to translocation of protons across the mitochondrial inner membrane, with protons being carried across the membrane as hydrogens on the quinol. In the process called Q cycle, 2 protons are consumed from the matrix, 4 protons are released into the intermembrane space and 2 electrons are passed to cytochrome c. The sequence is that of Cytochrome b-c1 complex subunit 6, mitochondrial (qcr6) from Neurospora crassa (strain ATCC 24698 / 74-OR23-1A / CBS 708.71 / DSM 1257 / FGSC 987).